A 157-amino-acid chain; its full sequence is AP-1 complex subunit sigma-2 (157 aa).

Belongs to the adaptor complexes small subunit family. In terms of assembly, adaptor protein complex 1 (AP-1) is a heterotetramer composed of two large adaptins (gamma-type subunit AP1G1 and beta-type subunit AP1B1), a medium adaptin (mu-type subunit AP1M1 or AP1M2) and a small adaptin (sigma-type subunit AP1S1 or AP1S2 or AP1S3). Binds to MUC1. Widely expressed.

It is found in the golgi apparatus. It localises to the cytoplasmic vesicle membrane. The protein resides in the membrane. The protein localises to the clathrin-coated pit. Functionally, subunit of clathrin-associated adaptor protein complex 1 that plays a role in protein sorting in the late-Golgi/trans-Golgi network (TGN) and/or endosomes. The AP complexes mediate both the recruitment of clathrin to membranes and the recognition of sorting signals within the cytosolic tails of transmembrane cargo molecules. The sequence is that of AP-1 complex subunit sigma-2 (AP1S2) from Homo sapiens (Human).